Consider the following 420-residue polypeptide: L-cysteine:1D-myo-inositol 2-amino-2-deoxy-alpha-D-glucopyranoside ligase (420 aa).

A Zn(2+)-binding site is contributed by Cys43. L-cysteinyl-5'-AMP-binding positions include 43–46, Thr58, and 81–83; these read CGIT and NIT. Positions 45 to 55 match the 'HIGH' region motif; it reads ITPYDATHLGH. Positions 187-192 match the 'ERGGDP' region motif; it reads ERGGDP. Trp227 contributes to the L-cysteinyl-5'-AMP binding site. Cys231 is a Zn(2+) binding site. 249–251 provides a ligand contact to L-cysteinyl-5'-AMP; the sequence is GSD. His256 is a Zn(2+) binding site. Ile289 is a binding site for L-cysteinyl-5'-AMP. A 'KMSKS' region motif is present at residues 295 to 299; it reads KMSKS.

The protein belongs to the class-I aminoacyl-tRNA synthetase family. MshC subfamily. In terms of assembly, monomer. Requires Zn(2+) as cofactor.

It carries out the reaction 1D-myo-inositol 2-amino-2-deoxy-alpha-D-glucopyranoside + L-cysteine + ATP = 1D-myo-inositol 2-(L-cysteinylamino)-2-deoxy-alpha-D-glucopyranoside + AMP + diphosphate + H(+). Functionally, catalyzes the ATP-dependent condensation of GlcN-Ins and L-cysteine to form L-Cys-GlcN-Ins. In Segniliparus rotundus (strain ATCC BAA-972 / CDC 1076 / CIP 108378 / DSM 44985 / JCM 13578), this protein is L-cysteine:1D-myo-inositol 2-amino-2-deoxy-alpha-D-glucopyranoside ligase.